A 336-amino-acid chain; its full sequence is Porphobilinogen deaminase (336 aa).

At C251 the chain carries S-(dipyrrolylmethanemethyl)cysteine. S327 and S329 each carry phosphoserine.

Belongs to the HMBS family. Requires dipyrromethane as cofactor.

It carries out the reaction 4 porphobilinogen + H2O = hydroxymethylbilane + 4 NH4(+). The protein operates within porphyrin-containing compound metabolism; protoporphyrin-IX biosynthesis; coproporphyrinogen-III from 5-aminolevulinate: step 2/4. Tetrapolymerization of the monopyrrole PBG into the hydroxymethylbilane pre-uroporphyrinogen in several discrete steps. This is Porphobilinogen deaminase (hem3) from Schizosaccharomyces pombe (strain 972 / ATCC 24843) (Fission yeast).